We begin with the raw amino-acid sequence, 256 residues long: Putative bidirectional sugar transporter SWEET7e (256 aa).

The Extracellular segment spans residues M1–N9. Residues V10–F30 traverse the membrane as a helical segment. A MtN3/slv 1 domain is found at V10 to K97. Over W31 to D45 the chain is Cytoplasmic. A helical membrane pass occupies residues P46 to H66. Residues P67–S69 are Extracellular-facing. A helical membrane pass occupies residues I70–F90. Over F91–K100 the chain is Cytoplasmic. The helical transmembrane segment at M101–L121 threads the bilayer. The Extracellular segment spans residues G122–S130. The helical transmembrane segment at L131–I151 threads the bilayer. Residues V133–Q212 enclose the MtN3/slv 2 domain. Residues M152–M164 are Cytoplasmic-facing. Residues P165–I185 traverse the membrane as a helical segment. A topological domain (extracellular) is located at residue R186. A helical membrane pass occupies residues F187–I207. The Cytoplasmic segment spans residues L208–P256.

The protein belongs to the SWEET sugar transporter family. In terms of assembly, forms homooligomers and/or heterooligomers.

The protein resides in the cell membrane. Functionally, mediates both low-affinity uptake and efflux of sugar across the plasma membrane. In Oryza sativa subsp. japonica (Rice), this protein is Putative bidirectional sugar transporter SWEET7e (SWEET7E).